Here is a 210-residue protein sequence, read N- to C-terminus: Cytidylate kinase (210 aa).

9-17 (GPAAAGKGT) serves as a coordination point for ATP.

Belongs to the cytidylate kinase family. Type 1 subfamily.

The protein resides in the cytoplasm. The enzyme catalyses CMP + ATP = CDP + ADP. It catalyses the reaction dCMP + ATP = dCDP + ADP. The polypeptide is Cytidylate kinase (Agrobacterium fabrum (strain C58 / ATCC 33970) (Agrobacterium tumefaciens (strain C58))).